Consider the following 683-residue polypeptide: MSAQDFLVELGTEELPPKALATLGDAFLAGIEKGLQAAGLNYTGKQVYAAPRRLAVLIRQLDVQQPDRSINIDGPPLQAAFKDGEPTQAALGFAKKCGVELSEIDQSGAKLRFSQHIPGKATASLLPTIVEDSLNDLPIPKRMRWAASREEFVRPTQWLVMLLGDQVVDCTILSQQAGRESRGHRFHHPQNVVITTPANYVEDLRKAYVLADFAERRELIAKRTTELAMQQEGTAIVPPALLDEVTALVEWPVPLVCSFEERFLEVPQEALITTMQDNQKYFCLLDSEGKLLPRFITVANVESRDPKQIVSGNEKVVRPRLTDAEFFFKQDKKQPLETFNERLKNVVFQAQLGTVYDKAERVSRLAAYIAPLIGGDAQRAGRAGLLSKCDLATEMVGEFPEMQGVAGYYYALNDGEPQDVALALNEQYMPRGAGAELPQTLTGAAVAIADKLDTLVGIFGIGMLPTGSKDPYALRRAALGVLRILIEKQLDLDLTPAVEFAVKQFGAKVKAAGLAEQVLEFIFDRLRARYEDEGIDVATYLSVRALKPGSALDFDQRVQAVQAFRKLPEAEALAAVNKRVSNLLSKAEGAIAEQVEPKYFDNANEFSLYSAIQQADQAVQPMAAARQYSESLARLAALRDPVDAFFEAVMVNAEDAKVRANRYALLSRLRGLFLGVADISLLG.

The protein belongs to the class-II aminoacyl-tRNA synthetase family. As to quaternary structure, tetramer of two alpha and two beta subunits.

The protein resides in the cytoplasm. The enzyme catalyses tRNA(Gly) + glycine + ATP = glycyl-tRNA(Gly) + AMP + diphosphate. The protein is Glycine--tRNA ligase beta subunit of Pseudomonas putida (strain W619).